A 297-amino-acid chain; its full sequence is MRSWNSLFCLNSSRPPGHIVYPKHQAGHTGKQADHLGSQAFYPGRQHDYLVPPAGTAGIPVQNQPGRPEGVPWMPAPPPPLNCPPGLEYLSQIDMILIHQQIELLEVLFSFESSNMYEIKNSFGQRIYFAAEDTNFCIRNCCGRSRPFTLRITDNVGREVITLERPLRCNCCCCPCCLQEIEIQAPPGVPVGYVTQTWHPCLTKFTIKNQKREDVLKISGPCIVCSCIAGVDFEITSLDEQIVVGRISKHWSGFLREAFTDADNFGIQFPRDLDVKMKAVMIGACFLIDYMFFERTR.

A proline-rich domain (PRD) region spans residues 1-72; that stretch reads MRSWNSLFCL…NQPGRPEGVP (72 aa). At 1–276 the chain is on the cytoplasmic side; the sequence is MRSWNSLFCL…IQFPRDLDVK (276 aa). A Phosphothreonine; by PKC modification is found at T149. S-palmitoyl cysteine attachment occurs at residues C172, C173, C174, C176, and C177. Residues 277 to 293 traverse the membrane as a helical segment; the sequence is MKAVMIGACFLIDYMFF. The Extracellular portion of the chain corresponds to 294–297; the sequence is ERTR.

The protein belongs to the phospholipid scramblase family. Requires Ca(2+) as cofactor. As to expression, expression of isoform 1 seems restricted to testis.

The protein localises to the membrane. It localises to the nucleus. The catalysed reaction is a 1,2-diacyl-sn-glycero-3-phosphocholine(in) = a 1,2-diacyl-sn-glycero-3-phosphocholine(out). Its function is as follows. May catalyze calcium-induced ATP-independent rapid bidirectional and non-specific movement of phospholipids (lipid scrambling or lipid flip-flop) between the inner and outer leaflet of the plasma membrane. Functionally, has no phospholipid scramblase activity, due to the lack of a N-terminal proline-rich domain. The protein is Phospholipid scramblase 2 of Homo sapiens (Human).